Consider the following 133-residue polypeptide: Lanmodulin (133 aa).

The N-terminal stretch at 1–21 (MAFRLSSAVLLAALVAAPAYA) is a signal peptide. The Nd(3+) site is built by D35, D37, D39, T41, E46, D59, D61, D63, T65, E70, D84, D86, D88, T90, E95, N108, D110, D112, T114, and E119. EF-hand domains follow at residues 35–46 (DPDKDGTIDLKE), 59–70 (DPDKDGTLDAKE), 84–95 (DPDNDGTLDKKE), and 108–119 (NPDNDGTIDARE).

In terms of assembly, monomer.

The protein resides in the periplasm. High-affinity lanthanide (Ln)-binding protein. Shows 100 million-fold selectivity for La(3+) over Ca(2+). Binds 3 equiv of Ln(3+) with picomolar affinity and a fourth with approximately micromolar affinity. May be involved in receiving and then transporting lanthanides (such as La(3+), Nd(3+) and Sm(3+)) to a specific periplasmic destination. The chain is Lanmodulin from Methylorubrum extorquens (strain ATCC 14718 / DSM 1338 / JCM 2805 / NCIMB 9133 / AM1) (Methylobacterium extorquens).